A 323-amino-acid polypeptide reads, in one-letter code: Glutamyl-Q tRNA(Asp) synthetase (323 aa).

Residues 5–9 (RFAPT) and Glu-41 contribute to the L-glutamate site. The short motif at 8–18 (PTPSGALHLGN) is the 'HIGH' region element. Zn(2+) is bound by residues Cys-105, Cys-107, Tyr-129, and Cys-133. 2 residues coordinate L-glutamate: Tyr-193 and Arg-211. The 'KMSKS' region signature appears at 249 to 253 (RLAKR). Residue Lys-252 coordinates ATP.

The protein belongs to the class-I aminoacyl-tRNA synthetase family. GluQ subfamily. Zn(2+) is required as a cofactor.

Functionally, catalyzes the tRNA-independent activation of glutamate in presence of ATP and the subsequent transfer of glutamate onto a tRNA(Asp). Glutamate is transferred on the 2-amino-5-(4,5-dihydroxy-2-cyclopenten-1-yl) moiety of the queuosine in the wobble position of the QUC anticodon. The protein is Glutamyl-Q tRNA(Asp) synthetase of Symbiobacterium thermophilum (strain DSM 24528 / JCM 14929 / IAM 14863 / T).